The sequence spans 239 residues: Ribosomal RNA small subunit methyltransferase G (239 aa).

S-adenosyl-L-methionine-binding positions include Gly77, Phe82, 128–129 (AE), and Arg146. The interval 215 to 239 (DKKRQTPKKYPRKPGTPNKTPLLEK) is disordered.

This sequence belongs to the methyltransferase superfamily. RNA methyltransferase RsmG family.

The protein localises to the cytoplasm. Its function is as follows. Specifically methylates the N7 position of guanine in position 535 of 16S rRNA. The sequence is that of Ribosomal RNA small subunit methyltransferase G from Staphylococcus aureus (strain bovine RF122 / ET3-1).